The chain runs to 304 residues: Syntaxin-132 (304 aa).

Met1 bears the N-acetylmethionine mark. Positions 1 to 30 (MNDLLKGSFELPRGQSSREGDVELGEQQGG) are disordered. Topologically, residues 1 to 275 (MNDLLKGSFE…AKSLQKNSRK (275 aa)) are cytoplasmic. 2 coiled-coil regions span residues 34–67 (LEDF…ESKS) and 129–162 (TLSL…DRRV). Residues 204–266 (LAEIQERHDA…QSGNTALQRA (63 aa)) form the t-SNARE coiled-coil homology domain. Residues 276-296 (WMCIAIIILLIVVAVIVVGVL) form a helical; Anchor for type IV membrane protein membrane-spanning segment. The Vesicular portion of the chain corresponds to 297–304 (KPWKNKSA).

It belongs to the syntaxin family. In terms of assembly, part of the t-SNARE complex. Widely expressed in all tissues throughout plant development.

It localises to the cell membrane. Vesicle trafficking protein that functions in the secretory pathway. Acts in coordination with SYP123 to mediate tip-focused membrane trafficking for root hair tip growth. Functions in root hair elongation by forming SNARE complexes with VAMP721,VAMP722 or VAMP724. Involved in cytokinesis. Acts as a cell plate-specific syntaxin, required for the fusion of vesicles at the plane of cell division. Required for secretory trafficking to the plasma membrane during interphase. Involved in the regulation of density of the H(+) ATPase proteins at the plasma membrane of root and shoot in epidermal cells. Modulation of SYP132 expression by auxin affects clathrin-sensitive H(+) ATPase traffic from the plasma membrane, and influences apoplastic acidification and plant growth. In Arabidopsis thaliana (Mouse-ear cress), this protein is Syntaxin-132.